Reading from the N-terminus, the 1972-residue chain is Myosin-11 (1972 aa).

Residues Ser-8, Ser-23, and Ser-40 each carry the phosphoserine modification. Positions Val-31–Pro-81 constitute a Myosin N-terminal SH3-like domain. The 699-residue stretch at Ser-85–Asp-783 folds into the Myosin motor domain. Lys-129 carries the N6,N6,N6-trimethyllysine modification. Gly-178–Thr-185 serves as a coordination point for ATP. 2 actin-binding regions span residues Leu-661–His-683 and Arg-762–Ala-776. One can recognise an IQ domain in the interval Ile-786–Ala-815. Residues Leu-844–Ala-1934 adopt a coiled-coil conformation. The residue at position 1177 (Thr-1177) is a Phosphothreonine. A phosphoserine mark is found at Ser-1684 and Ser-1722. Residues Asn-1771 to Gln-1788 are compositionally biased toward polar residues. Disordered stretches follow at residues Asn-1771 to Leu-1797 and Gln-1867 to Glu-1972. Residues Gln-1867–Asn-1876 show a composition bias toward basic and acidic residues. The tract at residues Ser-1935–Glu-1972 is C-terminal. Residue Thr-1951 is modified to Phosphothreonine. Phosphoserine occurs at positions 1954 and 1971.

The protein belongs to the TRAFAC class myosin-kinesin ATPase superfamily. Myosin family. Muscle myosin is a hexameric protein that consists of 2 heavy chain subunits (MHC), 2 alkali light chain subunits (MLC) and 2 regulatory light chain subunits (MLC-2).

Its subcellular location is the melanosome. The protein resides in the cytoplasm. It localises to the myofibril. In terms of biological role, muscle contraction. This Mus musculus (Mouse) protein is Myosin-11 (Myh11).